The following is a 1399-amino-acid chain: DNA-directed RNA polymerase subunit beta' (1399 aa).

Zn(2+) contacts are provided by cysteine 70, cysteine 72, cysteine 85, and cysteine 88. Residues aspartate 460, aspartate 462, and aspartate 464 each coordinate Mg(2+). Residues cysteine 814, cysteine 888, cysteine 895, and cysteine 898 each coordinate Zn(2+). The disordered stretch occupies residues 1367 to 1399; sequence SERKRQRDLGKPQRVSASEAEAALTEALNSSGN. The span at 1382 to 1399 shows a compositional bias: low complexity; sequence SASEAEAALTEALNSSGN.

The protein belongs to the RNA polymerase beta' chain family. In terms of assembly, the RNAP catalytic core consists of 2 alpha, 1 beta, 1 beta' and 1 omega subunit. When a sigma factor is associated with the core the holoenzyme is formed, which can initiate transcription. The cofactor is Mg(2+). Zn(2+) serves as cofactor.

It carries out the reaction RNA(n) + a ribonucleoside 5'-triphosphate = RNA(n+1) + diphosphate. Its function is as follows. DNA-dependent RNA polymerase catalyzes the transcription of DNA into RNA using the four ribonucleoside triphosphates as substrates. This chain is DNA-directed RNA polymerase subunit beta', found in Pseudomonas paraeruginosa (strain DSM 24068 / PA7) (Pseudomonas aeruginosa (strain PA7)).